A 1193-amino-acid polypeptide reads, in one-letter code: uncharacterized protein (1193 aa).

A signal peptide spans 1–25 (MKIKFINYLLLFFIIFLNYNGFVKS). At 26 to 1172 (DCYQELDLVL…PQDPSDELST (1147 aa)) the chain is on the extracellular side. Asn90, Asn183, Asn226, Asn265, Asn281, Asn345, Asn357, Asn436, Asn516, Asn552, Asn583, Asn627, Asn712, Asn765, Asn822, Asn938, Asn1038, and Asn1092 each carry an N-linked (GlcNAc...) asparagine glycan. Residues 1173–1193 (SSFVQVNLLFLSILIFTIFIF) form a helical membrane-spanning segment.

The protein resides in the membrane. This is an uncharacterized protein from Dictyostelium discoideum (Social amoeba).